The following is a 409-amino-acid chain: Serine/threonine transporter SstT (409 aa).

The next 9 helical transmembrane spans lie at 14-34 (GSLV…ATLS), 48-68 (FVGA…AASI), 82-102 (IVIL…LMSF), 141-161 (ALMT…GLAL), 192-212 (IGIF…AIAG), 216-236 (LLLV…PAIV), 290-310 (IPLG…ILTL), 322-342 (ILTA…ASGV), and 357-377 (FGIS…IGVI).

The protein belongs to the dicarboxylate/amino acid:cation symporter (DAACS) (TC 2.A.23) family.

It is found in the cell inner membrane. The enzyme catalyses L-serine(in) + Na(+)(in) = L-serine(out) + Na(+)(out). It carries out the reaction L-threonine(in) + Na(+)(in) = L-threonine(out) + Na(+)(out). In terms of biological role, involved in the import of serine and threonine into the cell, with the concomitant import of sodium (symport system). This Shewanella woodyi (strain ATCC 51908 / MS32) protein is Serine/threonine transporter SstT.